The following is a 465-amino-acid chain: Ran-binding protein 3-like (465 aa).

Residues 276 to 417 enclose the RanBD1 domain; it reads SQPSRKCLLE…ALQSFNKQRD (142 aa).

Interacts with SMAD1, SMAD5 and SMAD8; the interaction (with SMAD at least) increases when SMAD1 is not phosphorylated and mediates SMAD1 nuclear export.

The protein resides in the nucleus. It localises to the cytoplasm. Nuclear export factor for BMP-specific SMAD1/5/8 that plays a critical role in terminating BMP signaling and regulating mesenchymal stem cell differentiation by blocking osteoblast differentiation to promote myogenic differention. Directly recognizes dephosphorylated SMAD1/5/8 and mediates their nuclear export in a Ran-dependent manner. The sequence is that of Ran-binding protein 3-like (RANBP3L) from Homo sapiens (Human).